Here is a 2066-residue protein sequence, read N- to C-terminus: Kinesin-like protein KIN-12C (2066 aa).

Disordered stretches follow at residues 1 to 41 (MSRN…SQIQ) and 59 to 116 (RAQH…RVSL). Residues 20–33 (SLSLFSPSRPPLNS) are compositionally biased toward low complexity. A compositionally biased stretch (basic and acidic residues) spans 67–76 (GPEKKFEVLE). Over residues 99-109 (EPNSAQSTPTR) the composition is skewed to polar residues. Positions 168–505 (NVQVLIRLRP…LKFAQRAKLI (338 aa)) constitute a Kinesin motor domain. Residue 249–256 (GQTGSGKT) coordinates ATP. Microtubules-binding regions lie at residues 375–379 (SSRSH), 406–412 (VDLAGSE), and 454–458 (HVPYR). Coiled coils occupy residues 1521–1618 (DLKT…VDEI) and 1650–1772 (KIYA…EILL). 2 disordered regions span residues 1803 to 1823 (SAAE…RGSS) and 2043 to 2066 (KYRK…TRYR). Residues 1905-2051 (VQRVVEKAQQ…AKYRKTSNNH (147 aa)) are a coiled coil. Positions 2047–2066 (TSNNHPSTRTQGQSSGTRYR) are enriched in polar residues.

This sequence belongs to the TRAFAC class myosin-kinesin ATPase superfamily. Kinesin family. KIN-12 subfamily. In terms of assembly, interacts with TAN. Interacts with RANGAP1. As to expression, expressed in tissues enriched in dividing cells, such as root meristems, root primordia, and leaf primordia/young leaves.

The protein resides in the cytoplasm. It localises to the cytoskeleton. It is found in the phragmoplast. Its function is as follows. Involved in the spatial control of cytokinesis by a proper phragmoplast guidance. Localizes TAN to the cortical division sites (CDS) during cytokinesis via direct binding. This is Kinesin-like protein KIN-12C from Arabidopsis thaliana (Mouse-ear cress).